Here is a 200-residue protein sequence, read N- to C-terminus: Probable GTP-binding protein EngB (200 aa).

In terms of domain architecture, EngB-type G spans T22 to A194. Residues G30–S37, G57–L61, D75–G78, T142–D145, and F173–A175 contribute to the GTP site. Mg(2+) is bound by residues S37 and T59.

This sequence belongs to the TRAFAC class TrmE-Era-EngA-EngB-Septin-like GTPase superfamily. EngB GTPase family. Requires Mg(2+) as cofactor.

Necessary for normal cell division and for the maintenance of normal septation. In Pelobacter propionicus (strain DSM 2379 / NBRC 103807 / OttBd1), this protein is Probable GTP-binding protein EngB.